Reading from the N-terminus, the 1755-residue chain is Transposon Ty1-ER1 Gag-Pol polyprotein (1755 aa).

3 stretches are compositionally biased toward polar residues: residues 1-23, 48-60, and 127-152; these read MESQQLSQHSPISHGSACASVTS, TKANSQQTTTPAS, and QSQFPQYPSSVGTPLSTPSPESGNTF. Disordered regions lie at residues 1 to 93, 126 to 174, and 352 to 421; these read MESQ…MMTQ, PQSQ…PPPM, and GSRN…SKST. Low complexity predominate over residues 153–165; sequence TDSSSADSDMTST. The tract at residues 299-401 is RNA-binding; it reads NNGIHINNKV…NSKSKTARAH (103 aa). The span at 402-418 shows a compositional bias: low complexity; that stretch reads NVSTSNNSPSTDNDSIS. Residue S416 is modified to Phosphoserine. Residue D461 is the For protease activity; shared with dimeric partner of the active site. The tract at residues 583–640 is integrase-type zinc finger-like; that stretch reads NVHTSESTRKYPYPFIHRMLAHANAQTIRYSLKNNTITYFNESDVDWSSAIDYQCPDC. The Integrase catalytic domain occupies 660–835; sequence NSYEPFQYLH…AGLDISTLLP (176 aa). 2 residues coordinate Mg(2+): D671 and D736. Disordered regions lie at residues 956 to 1087, 1092 to 1111, and 1130 to 1171; these read SKAV…ETEK, RSPSIDASPPENNSSHNIVP, and DLPL…DSNA. Residues 960–969 show a composition bias toward low complexity; the sequence is SPTDSTPPST. Residues 1005-1015 show a composition bias toward polar residues; that stretch reads STPQISNIEST. The segment covering 1038 to 1053 has biased composition (basic and acidic residues); the sequence is ESSHASKSKDFRHSDS. Composition is skewed to polar residues over residues 1054-1082 and 1101-1111; these read YSENETNHTNVPISSTGGTNNKTVPQISD and PENNSSHNIVP. Positions 1178–1212 match the Bipartite nuclear localization signal motif; it reads KKRSLEDNETEIKVSRDTWNTKNMRSLEPPRSKKR. Positions 1338-1476 constitute a Reverse transcriptase Ty1/copia-type domain; it reads NNYYITQLDI…DILGLEIKYQ (139 aa). Residues D1346, D1427, D1428, D1610, E1652, and D1685 each contribute to the Mg(2+) site. An RNase H Ty1/copia-type domain is found at 1610-1752; sequence DASYGNQPYY…IKTFKLLTNK (143 aa).

As to quaternary structure, the capsid protein forms a homotrimer, from which the VLPs are assembled. The protease is a homodimer, whose active site consists of two apposed aspartic acid residues. Post-translationally, initially, virus-like particles (VLPs) are composed of the structural unprocessed proteins Gag and Gag-Pol, and also contain the host initiator methionine tRNA (tRNA(i)-Met) which serves as a primer for minus-strand DNA synthesis, and a dimer of genomic Ty RNA. Processing of the polyproteins occurs within the particle and proceeds by an ordered pathway, called maturation. First, the protease (PR) is released by autocatalytic cleavage of the Gag-Pol polyprotein yielding capsid protein p45 and a Pol-p154 precursor protein. This cleavage is a prerequisite for subsequent processing of Pol-p154 at the remaining sites to release the mature structural and catalytic proteins. Maturation takes place prior to the RT reaction and is required to produce transposition-competent VLPs.

The protein localises to the cytoplasm. The protein resides in the nucleus. It catalyses the reaction DNA(n) + a 2'-deoxyribonucleoside 5'-triphosphate = DNA(n+1) + diphosphate. It carries out the reaction Endonucleolytic cleavage to 5'-phosphomonoester.. Functionally, capsid protein (CA) is the structural component of the virus-like particle (VLP), forming the shell that encapsulates the retrotransposons dimeric RNA genome. The particles are assembled from trimer-clustered units and there are holes in the capsid shells that allow for the diffusion of macromolecules. CA also has nucleocapsid-like chaperone activity, promoting primer tRNA(i)-Met annealing to the multipartite primer-binding site (PBS), dimerization of Ty1 RNA and initiation of reverse transcription. The aspartyl protease (PR) mediates the proteolytic cleavages of the Gag and Gag-Pol polyproteins after assembly of the VLP. Its function is as follows. Reverse transcriptase/ribonuclease H (RT) is a multifunctional enzyme that catalyzes the conversion of the retro-elements RNA genome into dsDNA within the VLP. The enzyme displays a DNA polymerase activity that can copy either DNA or RNA templates, and a ribonuclease H (RNase H) activity that cleaves the RNA strand of RNA-DNA heteroduplexes during plus-strand synthesis and hydrolyzes RNA primers. The conversion leads to a linear dsDNA copy of the retrotransposon that includes long terminal repeats (LTRs) at both ends. In terms of biological role, integrase (IN) targets the VLP to the nucleus, where a subparticle preintegration complex (PIC) containing at least integrase and the newly synthesized dsDNA copy of the retrotransposon must transit the nuclear membrane. Once in the nucleus, integrase performs the integration of the dsDNA into the host genome. The protein is Transposon Ty1-ER1 Gag-Pol polyprotein (TY1B-ER1) of Saccharomyces cerevisiae (strain ATCC 204508 / S288c) (Baker's yeast).